The chain runs to 107 residues: Protein phosphatase 1 regulatory subunit INH3 (107 aa).

Positions 1–14 (MSTATRPSSSATTS) are enriched in low complexity. 2 disordered regions span residues 1-40 (MSTATRPSSSATTSVILENPVSQSQPTERLVLRLNRKKKK) and 69-107 (PFDEDDSEEEDDNNHHCDHNHEHSESGEASSSNDSKAVD). A compositionally biased stretch (acidic residues) spans 71–80 (DEDDSEEEDD). The span at 81-94 (NNHHCDHNHEHSES) shows a compositional bias: basic and acidic residues. The segment covering 95-107 (GEASSSNDSKAVD) has biased composition (low complexity).

As to quaternary structure, interacts with protein phosphatase 1. In terms of tissue distribution, expressed in roots, cotyledons, leaves, flowers and embryos.

Inhibitor of protein-phosphatase 1 (PP1). Binds to and inhibits PP1 activity. Required for early embryogenesis progression. In Arabidopsis thaliana (Mouse-ear cress), this protein is Protein phosphatase 1 regulatory subunit INH3.